A 293-amino-acid polypeptide reads, in one-letter code: Glycine--tRNA ligase alpha subunit (293 aa).

The protein belongs to the class-II aminoacyl-tRNA synthetase family. In terms of assembly, tetramer of two alpha and two beta subunits.

It is found in the cytoplasm. It carries out the reaction tRNA(Gly) + glycine + ATP = glycyl-tRNA(Gly) + AMP + diphosphate. This chain is Glycine--tRNA ligase alpha subunit, found in Prochlorococcus marinus (strain MIT 9211).